A 928-amino-acid polypeptide reads, in one-letter code: Echinoderm microtubule-associated protein-like 4 (928 aa).

Positions 1–189 (MDGFAGSLDD…IPSDVENYDD (189 aa)) are microtubule-binding. The stretch at 14–63 (AASTSDVQDRLSALELRVQQQEDEITVLKAALADVLRRLAISEDQVATVR) forms a coiled coil. Positions 107–131 (SAAKSVKRSSTIEKSHNSWDASEES) are disordered. Over residues 116-131 (STIEKSHNSWDASEES) the composition is skewed to basic and acidic residues. WD repeat units lie at residues 199–237 (LKLEWVFGYRGRDCRANVYLLPTGEIVYFIASVVVLFNY), 241–288 (TQRH…VWDS), 296–336 (VIGL…VWDW), 343–378 (AEIKTTNEVVLTVEFHPTDACTIVTCGKSHIFFWTW), 385–424 (RKQGIFGKYEKPKFVQCLAFLANGDVLAGDSGGVMLIWSK), 442–480 (QISRQIKAHDGSVFTLCQMRNGMLLTGGGKDRKVIMWDH), 485–521 (EREIEVPDQYGTIRAVAEGKGDQFLIGTSRNFILRGT), 524–563 (DGFQVEVQGHTDELWGLATHPFKDLLLTCAQDKQVCLWNS), 567–604 (SLEWTRVLDEPGHCADFHPTGTVVAIGTHSGRWFVLDA), 610–646 (VSIHTDGNEQLSVMRYSVDGALLAVGSHDNFIYLYNV), 653–692 (YSRYGKCTGHSSYITHLDWSPDNQYIMSNSGDYEILYWDI), 702–760 (RSDC…LFQY), and 767–806 (APSHKYSAHSSHVTNVSFTHKDSHLISTGGKDMSIMQWRL). Positions 821 to 928 (SSSAVNSPVV…ENQDDSSPLS (108 aa)) are disordered. The span at 836-845 (QPNTPTNLPQ) shows a compositional bias: polar residues. Over residues 867-876 (DALEQPEELN) the composition is skewed to acidic residues. Polar residues predominate over residues 877–898 (EVQSEKCSSQPEGANGQEPSNE).

The protein belongs to the WD repeat EMAP family. In terms of assembly, homotrimer; self-association is mediated by the N-terminal coiled coil.

The protein localises to the cytoplasm. It is found in the cytoskeleton. The protein resides in the spindle. It localises to the microtubule organizing center. Its subcellular location is the midbody. Its function is as follows. Essential for the formation and stability of microtubules (MTs). Required for the organization of the mitotic spindle and for the proper attachment of kinetochores to MTs. Promotes the recruitment of NUDC to the mitotic spindle for mitotic progression. The sequence is that of Echinoderm microtubule-associated protein-like 4 (eml4) from Xenopus tropicalis (Western clawed frog).